Here is a 185-residue protein sequence, read N- to C-terminus: Ribosome-recycling factor (185 aa).

It belongs to the RRF family.

It is found in the cytoplasm. Functionally, responsible for the release of ribosomes from messenger RNA at the termination of protein biosynthesis. May increase the efficiency of translation by recycling ribosomes from one round of translation to another. This chain is Ribosome-recycling factor, found in Listeria innocua serovar 6a (strain ATCC BAA-680 / CLIP 11262).